The chain runs to 185 residues: MTKEIVTKAQERFEQSHQSLSREFAGIRAGRANASLLDRIQVEYYGAPTPLNQLASITVPEARVLLISPFDKSSIKDIERAINESDLGINPANDGSVIRLVIPALTEETRRDLAKEVKKVGENAKIAIRNIRRDAMDEAKKQEKNKEITEDDLKSLEKDIQKATDDAVKHIDEMTANKEKELLEV.

This sequence belongs to the RRF family.

The protein localises to the cytoplasm. In terms of biological role, responsible for the release of ribosomes from messenger RNA at the termination of protein biosynthesis. May increase the efficiency of translation by recycling ribosomes from one round of translation to another. The polypeptide is Ribosome-recycling factor (Streptococcus agalactiae serotype V (strain ATCC BAA-611 / 2603 V/R)).